We begin with the raw amino-acid sequence, 733 residues long: Catalase-peroxidase (733 aa).

Residues 1–25 (MNEERKCPITGATHKPSAEKGRSNH) are disordered. Over residues 16–25 (PSAEKGRSNH) the composition is skewed to basic and acidic residues. A cross-link (tryptophyl-tyrosyl-methioninium (Trp-Tyr) (with M-245)) is located at residues 96-219 (WHSAGTYRTS…LAAVQMGLIY (124 aa)). Catalysis depends on histidine 97, which acts as the Proton acceptor. Positions 219-245 (YVNPEGPNGKPDPLAAAKDIRETFARM) form a cross-link, tryptophyl-tyrosyl-methioninium (Tyr-Met) (with W-96). Histidine 260 is a heme b binding site.

The protein belongs to the peroxidase family. Peroxidase/catalase subfamily. Homodimer or homotetramer. It depends on heme b as a cofactor. In terms of processing, formation of the three residue Trp-Tyr-Met cross-link is important for the catalase, but not the peroxidase activity of the enzyme.

The catalysed reaction is H2O2 + AH2 = A + 2 H2O. The enzyme catalyses 2 H2O2 = O2 + 2 H2O. Functionally, bifunctional enzyme with both catalase and broad-spectrum peroxidase activity. This is Catalase-peroxidase from Chlorobium chlorochromatii (strain CaD3).